Reading from the N-terminus, the 469-residue chain is L-seryl-tRNA(Sec) selenium transferase (469 aa).

Position 298 is an N6-(pyridoxal phosphate)lysine (lysine 298).

The protein belongs to the SelA family. Pyridoxal 5'-phosphate serves as cofactor.

It is found in the cytoplasm. The enzyme catalyses L-seryl-tRNA(Sec) + selenophosphate + H(+) = L-selenocysteinyl-tRNA(Sec) + phosphate. It participates in aminoacyl-tRNA biosynthesis; selenocysteinyl-tRNA(Sec) biosynthesis; selenocysteinyl-tRNA(Sec) from L-seryl-tRNA(Sec) (bacterial route): step 1/1. In terms of biological role, converts seryl-tRNA(Sec) to selenocysteinyl-tRNA(Sec) required for selenoprotein biosynthesis. This chain is L-seryl-tRNA(Sec) selenium transferase, found in Nitratidesulfovibrio vulgaris (strain ATCC 29579 / DSM 644 / CCUG 34227 / NCIMB 8303 / VKM B-1760 / Hildenborough) (Desulfovibrio vulgaris).